A 595-amino-acid polypeptide reads, in one-letter code: NADH-quinone oxidoreductase subunit C/D (595 aa).

An NADH dehydrogenase I subunit C region spans residues 1–186 (MAETDIAMPE…TPYMQDKAKQ (186 aa)). The interval 210 to 595 (DFMFLNLGPN…IDVVMADVDR (386 aa)) is NADH dehydrogenase I subunit D.

The protein in the N-terminal section; belongs to the complex I 30 kDa subunit family. In the C-terminal section; belongs to the complex I 49 kDa subunit family. In terms of assembly, NDH-1 is composed of 13 different subunits. Subunits NuoB, CD, E, F, and G constitute the peripheral sector of the complex.

The protein localises to the cell inner membrane. The catalysed reaction is a quinone + NADH + 5 H(+)(in) = a quinol + NAD(+) + 4 H(+)(out). NDH-1 shuttles electrons from NADH, via FMN and iron-sulfur (Fe-S) centers, to quinones in the respiratory chain. The immediate electron acceptor for the enzyme in this species is believed to be ubiquinone. Couples the redox reaction to proton translocation (for every two electrons transferred, four hydrogen ions are translocated across the cytoplasmic membrane), and thus conserves the redox energy in a proton gradient. This chain is NADH-quinone oxidoreductase subunit C/D, found in Acinetobacter baumannii (strain AYE).